The following is a 537-amino-acid chain: Glucocorticoid-induced transcript 1 protein (537 aa).

Disordered stretches follow at residues 1-45 (MSTA…APAA) and 62-254 (LLRG…HGNH). A phosphoserine mark is found at Ser-69, Ser-96, Ser-98, and Ser-99. The segment covering 69–86 (SPTRPAAAATAAAALGSL) has biased composition (low complexity). A compositionally biased stretch (pro residues) spans 97–106 (PSSPTPPPAA). The residue at position 101 (Thr-101) is a Phosphothreonine. Residues 121–136 (RSPESRRRSSSPERRS) are compositionally biased toward basic and acidic residues. Over residues 152 to 168 (IRTSSTIRRTSSLDTIT) the composition is skewed to low complexity. 2 positions are modified to phosphoserine: Ser-162 and Ser-163. Thr-166 and Thr-168 each carry phosphothreonine. Residues 178-192 (RDPHVHYPSCMRDKA) are compositionally biased toward basic and acidic residues. The residue at position 214 (Ser-214) is a Phosphoserine. A coiled-coil region spans residues 217-244 (SADQLKEIAKLRQQLQRSKQSSRHSKEK). Ser-248 carries the post-translational modification Phosphoserine. Thr-256 is subject to Phosphothreonine. Ser-293 is subject to Phosphoserine. A compositionally biased stretch (basic and acidic residues) spans 309-321 (EVSKPLDIPDGRR). The segment at 309–407 (EVSKPLDIPD…KPNNSYMFKR (99 aa)) is disordered. A compositionally biased stretch (polar residues) spans 329 to 346 (RSSSTRSIDTQTPSVQER). Thr-333 carries the phosphothreonine modification. Position 335 is a phosphoserine (Ser-335). Thr-340 is modified (phosphothreonine). Low complexity predominate over residues 347–359 (SSSCSSHSPCVSP). Phosphoserine occurs at positions 384, 388, 396, 402, and 470. A disordered region spans residues 495 to 520 (SLSDDTSTADSLEPSAQQPSQQQQLL).

As to expression, predominantly expressed in thymus and testis, especially in CD4+CD8+ cells and at specific stages of spermatogenesis.

This chain is Glucocorticoid-induced transcript 1 protein (Glcci1), found in Mus musculus (Mouse).